Here is a 293-residue protein sequence, read N- to C-terminus: Glutamyl-Q tRNA(Asp) synthetase (293 aa).

Residues 4-8 and E40 each bind L-glutamate; that span reads RYAPS. A 'HIGH' region motif is present at residues 7–17; it reads PSPSGDLHFGN. Zn(2+) is bound by residues C92, C94, Y113, and C117. L-glutamate-binding residues include Y180 and R198. Residues 236-240 carry the 'KMSKS' region motif; sequence RLAKR. Position 239 (K239) interacts with ATP.

The protein belongs to the class-I aminoacyl-tRNA synthetase family. GluQ subfamily. It depends on Zn(2+) as a cofactor.

Its function is as follows. Catalyzes the tRNA-independent activation of glutamate in presence of ATP and the subsequent transfer of glutamate onto a tRNA(Asp). Glutamate is transferred on the 2-amino-5-(4,5-dihydroxy-2-cyclopenten-1-yl) moiety of the queuosine in the wobble position of the QUC anticodon. The polypeptide is Glutamyl-Q tRNA(Asp) synthetase (Corynebacterium glutamicum (strain ATCC 13032 / DSM 20300 / JCM 1318 / BCRC 11384 / CCUG 27702 / LMG 3730 / NBRC 12168 / NCIMB 10025 / NRRL B-2784 / 534)).